We begin with the raw amino-acid sequence, 1673 residues long: Protein TIC 214 (1673 aa).

A run of 6 helical transmembrane segments spans residues 32 to 52, 70 to 90, 93 to 113, 130 to 150, 170 to 190, and 218 to 238; these read AGLYYGFLTALALKTSYILLI, LILGQLGQLLSIYYAPLYIAF, PYTLTVLTLIYFLVNLFGNNL, LEILCIFLNNLILQLLNTCIF, MVFLISSFSAWLIGQILVLMC, and FFLVVNCLFGSSLFILTIQSL. 2 stretches are compositionally biased toward basic and acidic residues: residues 264 to 276 and 283 to 298; these read LKKSGVAKEGKST and SHEKDSLKKEPYSKLE. Disordered stretches follow at residues 264-302, 547-611, 1120-1146, and 1370-1433; these read LKKSGVAKEGKSTEDEEDLSHEKDSLKKEPYSKLENEDE, VVFD…YSIR, NKQSLQKRNSSGNSNLDDSKNRNTDNL, and QQNQ…SEDD. Positions 562-586 are enriched in polar residues; sequence DNGNIQNNSSDKTINPQNNLTNLKP. Positions 597 to 611 are enriched in basic and acidic residues; sequence TTEKEPKDDKSYSIR. Residues 1120-1135 are compositionally biased toward polar residues; sequence NKQSLQKRNSSGNSNL. The span at 1370 to 1379 shows a compositional bias: low complexity; that stretch reads QQNQTTTKMN. 2 stretches are compositionally biased toward basic and acidic residues: residues 1380 to 1399 and 1406 to 1423; these read TETKNKQKSKVENEKNKKTE and TKNKQKSKTENEGNKETE.

The protein belongs to the TIC214 family. As to quaternary structure, part of the Tic complex.

It localises to the plastid. It is found in the chloroplast inner membrane. In terms of biological role, involved in protein precursor import into chloroplasts. May be part of an intermediate translocation complex acting as a protein-conducting channel at the inner envelope. The sequence is that of Protein TIC 214 from Cuscuta gronovii (Common dodder).